The following is a 162-amino-acid chain: Ribosome maturation factor RimP (162 aa).

It belongs to the RimP family.

It localises to the cytoplasm. Its function is as follows. Required for maturation of 30S ribosomal subunits. The protein is Ribosome maturation factor RimP of Cupriavidus necator (strain ATCC 17699 / DSM 428 / KCTC 22496 / NCIMB 10442 / H16 / Stanier 337) (Ralstonia eutropha).